The sequence spans 823 residues: Mitochondrial intermediate peptidase 2 (823 aa).

Residues 1–33 constitute a mitochondrion transit peptide; the sequence is MRRLQQSLRRRSARRCPFILIPHRLLTTSYASY. The tract at residues 532–553 is disordered; the sequence is IDGDGLPEDWDKPYGPGLEADK. Histidine 595 provides a ligand contact to Zn(2+). Glutamate 596 is a catalytic residue. Residues histidine 599 and histidine 602 each contribute to the Zn(2+) site.

It belongs to the peptidase M3 family. Zn(2+) serves as cofactor.

It is found in the mitochondrion matrix. It carries out the reaction Release of an N-terminal octapeptide as second stage of processing of some proteins imported into the mitochondrion.. Functionally, cleaves proteins, imported into the mitochondrion, to their mature size. While most mitochondrial precursor proteins are processed to the mature form in one step by mitochondrial processing peptidase (MPP), the sequential cleavage by MIP of an octapeptide after initial processing by MPP is a required step for a subgroup of nuclear-encoded precursor proteins destined for the matrix or the inner membrane. The protein is Mitochondrial intermediate peptidase 2 (OCT2) of Cryptococcus neoformans var. neoformans serotype D (strain B-3501A) (Filobasidiella neoformans).